The sequence spans 152 residues: Lipoprotein signal peptidase (152 aa).

3 helical membrane-spanning segments follow: residues 5-25 (LFVL…FWIV), 61-81 (WFFV…LATH), and 84-104 (LNIW…GNFI). Residues Asp114 and Asp130 contribute to the active site. The chain crosses the membrane as a helical span at residues 125–145 (IFNVADSYLTVGVILLVICLW).

The protein belongs to the peptidase A8 family.

It is found in the cell membrane. It carries out the reaction Release of signal peptides from bacterial membrane prolipoproteins. Hydrolyzes -Xaa-Yaa-Zaa-|-(S,diacylglyceryl)Cys-, in which Xaa is hydrophobic (preferably Leu), and Yaa (Ala or Ser) and Zaa (Gly or Ala) have small, neutral side chains.. It functions in the pathway protein modification; lipoprotein biosynthesis (signal peptide cleavage). Functionally, this protein specifically catalyzes the removal of signal peptides from prolipoproteins. This chain is Lipoprotein signal peptidase, found in Streptococcus pyogenes serotype M6 (strain ATCC BAA-946 / MGAS10394).